The chain runs to 772 residues: Glucocorticoid receptor (772 aa).

The segment covering 1–15 (MDSKESLSPPGREEV) has biased composition (basic and acidic residues). The segment at 1–22 (MDSKESLSPPGREEVPSSVLRP) is disordered. Residues 1–415 (MDSKESLSPP…TTAAGPPPKL (415 aa)) form a modulating region. Arg-25 carries the omega-N-methylarginine modification. The interval 39-82 (APVRVPASSPSLAPAAQPDSKQQRLAVDFPKGSASNAQQPDLSR) is disordered. Positions 44 to 58 (PASSPSLAPAAQPDS) are enriched in low complexity. Ser-47, Ser-115, Ser-136, and Ser-143 each carry phosphoserine. The tract at residues 132-186 (NRSASGADNPRSTAPAAGSAAPTEGFPKTHSDLASERQNPKGQTGGSAGSAKLHP) is disordered. Residues 143–156 (STAPAAGSAAPTEG) show a composition bias toward low complexity. Positions 158–170 (PKTHSDLASERQN) are enriched in basic and acidic residues. Residues Ser-203, Ser-211, and Ser-226 each carry the phosphoserine modification. A Glycyl lysine isopeptide (Lys-Gly) (interchain with G-Cter in SUMO2) cross-link involves residue Lys-258. Residues Lys-277 and Lys-293 each participate in a glycyl lysine isopeptide (Lys-Gly) (interchain with G-Cter in SUMO); alternate cross-link. Residues Lys-277 and Lys-293 each participate in a glycyl lysine isopeptide (Lys-Gly) (interchain with G-Cter in SUMO2); alternate cross-link. Phosphoserine is present on residues Ser-307 and Ser-400. Residue Lys-414 forms a Glycyl lysine isopeptide (Lys-Gly) (interchain with G-Cter in ubiquitin) linkage. 2 consecutive NR C4-type zinc fingers follow at residues 416–436 (CLVC…CGSC) and 452–476 (CAGR…YRKC). A DNA-binding region (nuclear receptor) is located at residues 416 to 481 (CLVCSDEASG…RYRKCLQAGM (66 aa)). Residues Lys-475, Lys-487, Lys-489, and Lys-490 each carry the N6-acetyllysine modification. An interaction with CLOCK region spans residues 480–772 (GMNLEARKTK…NIKKLLFHQK (293 aa)). Residues 482–518 (NLEARKTKKKIKGIQQTSTGVSQETSENPSNRTVVPA) form a hinge region. A disordered region spans residues 494–513 (GIQQTSTGVSQETSENPSNR). Residues 499–513 (STGVSQETSENPSNR) are compositionally biased toward polar residues. One can recognise an NR LBD domain in the interval 519 to 753 (ALPQLTPTLV…FPEMLAEIIT (235 aa)). Residues 527 to 692 (LVSLLEVIEP…EIRMTYIKEL (166 aa)) are interaction with CRY1. Lys-698 participates in a covalent cross-link: Glycyl lysine isopeptide (Lys-Gly) (interchain with G-Cter in SUMO).

The protein belongs to the nuclear hormone receptor family. NR3 subfamily. As to quaternary structure, heteromultimeric cytoplasmic complex with HSP90AA1, HSPA1A/HSPA1B, and FKBP5 or another immunophilin such as PPID, STIP1, or the immunophilin homolog PPP5C. Upon ligand binding FKBP5 dissociates from the complex and FKBP4 takes its place, thereby linking the complex to dynein and mediating transport to the nucleus, where the complex dissociates. Probably forms a complex composed of chaperones HSP90 and HSP70, co-chaperones CDC37, PPP5C, TSC1 and client protein TSC2, CDK4, AKT, RAF1 and NR3C1; this complex does not contain co-chaperones STIP1/HOP and PTGES3/p23. Directly interacts with UNC45A. Binds to DNA as a homodimer, and as heterodimer with NR3C2 or the retinoid X receptor. Binds STAT5A and STAT5B homodimers and heterodimers. Interacts with NRIP1, POU2F1, POU2F2 and TRIM28. Interacts with several coactivator complexes, including the SMARCA4 complex, CREBBP/EP300, TADA2L (Ada complex) and p160 coactivators such as NCOA2 and NCOA6. Interaction with BAG1 inhibits transactivation. Interacts with HEXIM1 and TGFB1I1. Interacts with NCOA1. Interacts with NCOA3, SMARCA4, SMARCC1, SMARCD1, and SMARCE1. Interacts with CLOCK, CRY1 and CRY2 in a ligand-dependent fashion. Interacts with CIART. Interacts with RWDD3. Interacts with UBE2I/UBC9 and this interaction is enhanced in the presence of RWDD3. Interacts with GRIP1. Interacts with NR4A3 (via nuclear receptor DNA-binding domain), represses transcription activity of NR4A3 on the POMC promoter Nur response element (NurRE). Directly interacts with PNRC2 to attract and form a complex with UPF1 and DCP1A; the interaction leads to rapid mRNA degradation. Interacts with GSK3B. Interacts with FNIP1 and FNIP2. Interacts (via C-terminus) with HNRNPU (via C-terminus). Interacts with MCM3AP. Interacts (via domain NR LBD) with HSP90AA1 and HSP90AB1. In the absence of hormonal ligand, interacts with TACC1. Interacts (via NR LBD domain) with ZNF764 (via KRAB domain); the interaction regulates transcription factor activity of NR3C1 by directing its actions toward certain biologic pathways. Post-translationally, acetylation by CLOCK reduces its binding to glucocorticoid response elements and its transcriptional activity. Increased proteasome-mediated degradation in response to glucocorticoids. In terms of processing, phosphorylated in the absence of hormone; becomes hyperphosphorylated in the presence of glucocorticoid. The Ser-203, Ser-226 and Ser-399-phosphorylated forms are mainly cytoplasmic, and the Ser-211-phosphorylated form is nuclear. Phosphorylation at Ser-211 increases transcriptional activity. Phosphorylation at Ser-203, Ser-226 and Ser-399 decreases signaling capacity. Phosphorylation at Ser-399 may protect from glucocorticoid-induced apoptosis. Phosphorylation at Ser-203 and Ser-211 is not required in regulation of chromosome segregation. May be dephosphorylated by PPP5C, attenuates NR3C1 action. Post-translationally, ubiquitinated by UBR5, leading to its degradation: UBR5 specifically recognizes and binds ligand-bound NR3C1 when it is not associated with coactivators (NCOAs). In presence of NCOAs, the UBR5-degron is not accessible, preventing its ubiquitination and degradation. Sumoylation at Lys-277 and Lys-293 negatively regulates its transcriptional activity. Sumoylation at Lys-698 positively regulates its transcriptional activity in the presence of RWDD3. Sumoylation at Lys-277 and Lys-293 is dispensable whereas sumoylation at Lys-698 is critical for the stimulatory effect of RWDD3 on its transcriptional activity. Heat shock increases sumoylation in a RWDD3-dependent manner.

Its subcellular location is the cytoplasm. It localises to the nucleus. The protein localises to the mitochondrion. It is found in the cytoskeleton. The protein resides in the spindle. Its subcellular location is the microtubule organizing center. It localises to the centrosome. The protein localises to the chromosome. It is found in the nucleoplasm. In terms of biological role, receptor for glucocorticoids (GC). Has a dual mode of action: as a transcription factor that binds to glucocorticoid response elements (GRE), both for nuclear and mitochondrial DNA, and as a modulator of other transcription factors. Affects inflammatory responses, cellular proliferation and differentiation in target tissues. Involved in chromatin remodeling. Plays a role in rapid mRNA degradation by binding to the 5' UTR of target mRNAs and interacting with PNRC2 in a ligand-dependent manner which recruits the RNA helicase UPF1 and the mRNA-decapping enzyme DCP1A, leading to RNA decay. Could act as a coactivator for STAT5-dependent transcription upon growth hormone (GH) stimulation and could reveal an essential role of hepatic GR in the control of body growth. Mediates glucocorticoid-induced apoptosis. Promotes accurate chromosome segregation during mitosis. May act as a tumor suppressor. May play a negative role in adipogenesis through the regulation of lipolytic and antilipogenic gene expression. The polypeptide is Glucocorticoid receptor (NR3C1) (Oryctolagus cuniculus (Rabbit)).